The sequence spans 173 residues: Shikimate kinase 2 (173 aa).

Residue 12–17 (GCGKTT) coordinates ATP. Residues threonine 16 and aspartate 32 each coordinate Mg(2+). The substrate site is built by aspartate 34, arginine 58, and glycine 79. Residues 112–126 (QASPQAHQRPTLTGR) are LID domain. Position 120 (arginine 120) interacts with ATP. Substrate is bound at residue arginine 139. Glutamine 155 lines the ATP pocket.

In terms of assembly, monomer. Requires Mg(2+) as cofactor.

The protein resides in the cytoplasm. It catalyses the reaction shikimate + ATP = 3-phosphoshikimate + ADP + H(+). It participates in metabolic intermediate biosynthesis; chorismate biosynthesis; chorismate from D-erythrose 4-phosphate and phosphoenolpyruvate: step 5/7. Its activity is regulated as follows. Inhibited by chloride and sulfate ions. Catalyzes the specific phosphorylation of the 3-hydroxyl group of shikimic acid using ATP as a cosubstrate. The sequence is that of Shikimate kinase 2 (aroL) from Dickeya chrysanthemi (Pectobacterium chrysanthemi).